Here is a 183-residue protein sequence, read N- to C-terminus: Crossover junction endodeoxyribonuclease RuvC (183 aa).

Active-site residues include aspartate 7, glutamate 66, and aspartate 138. Mg(2+) contacts are provided by aspartate 7, glutamate 66, and aspartate 138.

The protein belongs to the RuvC family. As to quaternary structure, homodimer which binds Holliday junction (HJ) DNA. The HJ becomes 2-fold symmetrical on binding to RuvC with unstacked arms; it has a different conformation from HJ DNA in complex with RuvA. In the full resolvosome a probable DNA-RuvA(4)-RuvB(12)-RuvC(2) complex forms which resolves the HJ. It depends on Mg(2+) as a cofactor.

Its subcellular location is the cytoplasm. It catalyses the reaction Endonucleolytic cleavage at a junction such as a reciprocal single-stranded crossover between two homologous DNA duplexes (Holliday junction).. In terms of biological role, the RuvA-RuvB-RuvC complex processes Holliday junction (HJ) DNA during genetic recombination and DNA repair. Endonuclease that resolves HJ intermediates. Cleaves cruciform DNA by making single-stranded nicks across the HJ at symmetrical positions within the homologous arms, yielding a 5'-phosphate and a 3'-hydroxyl group; requires a central core of homology in the junction. The consensus cleavage sequence is 5'-(A/T)TT(C/G)-3'. Cleavage occurs on the 3'-side of the TT dinucleotide at the point of strand exchange. HJ branch migration catalyzed by RuvA-RuvB allows RuvC to scan DNA until it finds its consensus sequence, where it cleaves and resolves the cruciform DNA. The protein is Crossover junction endodeoxyribonuclease RuvC of Burkholderia ambifaria (strain MC40-6).